A 606-amino-acid polypeptide reads, in one-letter code: Aspartate--tRNA(Asp/Asn) ligase (606 aa).

Residue glutamate 177 participates in L-aspartate binding. The interval 201–204 (QIFK) is aspartate. Arginine 223 is an L-aspartate binding site. Residues 223–225 (RDE) and glutamine 232 each bind ATP. Residue histidine 461 participates in L-aspartate binding. Glutamate 499 contributes to the ATP binding site. Arginine 506 is an L-aspartate binding site. 551–554 (GLDR) is an ATP binding site.

This sequence belongs to the class-II aminoacyl-tRNA synthetase family. Type 1 subfamily. Homodimer.

The protein resides in the cytoplasm. It catalyses the reaction tRNA(Asx) + L-aspartate + ATP = L-aspartyl-tRNA(Asx) + AMP + diphosphate. In terms of biological role, aspartyl-tRNA synthetase with relaxed tRNA specificity since it is able to aspartylate not only its cognate tRNA(Asp) but also tRNA(Asn). Reaction proceeds in two steps: L-aspartate is first activated by ATP to form Asp-AMP and then transferred to the acceptor end of tRNA(Asp/Asn). In Prochlorococcus marinus (strain MIT 9211), this protein is Aspartate--tRNA(Asp/Asn) ligase.